Consider the following 278-residue polypeptide: MTVLHSVDFFPSGNASVAIEPRLPQADFPEHHHDFHEIVIVEHGTGIHVFNGQPYTITGGTVCFVRAHDRHLYEHTDNLCLTNVLYRSPDRFQFLAGLNQLLPQELDGQYPSHWRVNHSVLQQVRQLVAQMEQQEGENDLPSTASREILFMQLLLLLRKSSLQENLENSASRLNLLLAWLEDHFADEVNWDAVADQFSLSLRTLHRQLKQQTGLTPQRYLNRLRLMKARHLLRHSEASVTDIAYRCGFSDSNHFSTLFRREFNWSPRDIRQGRDGFLQ.

An HTH araC/xylS-type domain is found at 174–272; the sequence is NLLLAWLEDH…NWSPRDIRQG (99 aa). 2 DNA-binding regions (H-T-H motif) span residues 191-212 and 239-262; these read DAVA…KQQT and VTDI…RREF.

Binds DNA as a dimer.

The protein resides in the cytoplasm. Functionally, activates expression of the rhaBAD and rhaT operons. This Shigella sonnei (strain Ss046) protein is HTH-type transcriptional activator RhaS.